The sequence spans 984 residues: uncharacterized protein (984 aa).

Residues 941-984 (FGPSGPGPNQGPGDDYNNFKSTKYPRNGYNKYQPNNRIHSRNRY) form a disordered region.

The protein localises to the virion. This is an uncharacterized protein from Acanthamoeba polyphaga (Amoeba).